An 895-amino-acid chain; its full sequence is La RNA-binding domain-containing protein LHP1 (895 aa).

5 disordered regions span residues 24–265 (ANGN…PPPS), 285–344 (SATS…HDAT), 359–590 (GEDK…LGHG), 796–857 (PDAA…AQDV), and 870–895 (VNGE…NYEQ). Residues 31 to 75 (SSPSSSSSATPEPTSLSSSTSGKKAFSTATSKSGQQKQGSSPQPG) show a composition bias toward low complexity. Residues 95-143 (QRTDRSEEKEKRGSSSKNWRERSHRDEKNQDDGEKRNGRERSKKEKGDK) are compositionally biased toward basic and acidic residues. The segment covering 152–170 (SATSSEKTAKSLSSSTKNA) has biased composition (low complexity). Polar residues-rich tracts occupy residues 172–184 (GVTS…NPIA) and 192–216 (KAQN…STIN). Residues 228-244 (DNWRARPAKVEKNEKTE) are compositionally biased toward basic and acidic residues. Residues 251-260 (QAQPQPQRQL) are compositionally biased toward low complexity. Residues 296–314 (KSDKEKSLTNGMVKEEDSG) show a composition bias toward basic and acidic residues. The span at 325 to 336 (AAAAAAAGTSST) shows a compositional bias: low complexity. Composition is skewed to basic and acidic residues over residues 359–371 (GEDK…ERLN), 405–428 (HAAE…REGG), 452–468 (EGKK…DGHA), and 485–495 (GDVKETKEGDA). Residues 496-508 (RSASQQESSSHRS) show a composition bias toward low complexity. A compositionally biased stretch (polar residues) spans 510 to 521 (PSISASANTGID). Over residues 563-572 (RGSFGGGRAR) the composition is skewed to gly residues. An HTH La-type RNA-binding domain is found at 706–796 (VPNLDPLRFY…GAESHRWVLP (91 aa)). A Phosphoserine modification is found at serine 847. The segment covering 873–884 (EIKEKEEVKAME) has biased composition (basic and acidic residues). Over residues 885-895 (NEGEESENYEQ) the composition is skewed to acidic residues.

Its function is as follows. May act as an RNA-binding protein. The polypeptide is La RNA-binding domain-containing protein LHP1 (Cryptococcus neoformans var. grubii serotype A (strain H99 / ATCC 208821 / CBS 10515 / FGSC 9487) (Filobasidiella neoformans var. grubii)).